The chain runs to 319 residues: Ribonuclease Z (319 aa).

Zn(2+) is bound by residues histidine 62, histidine 64, aspartate 66, histidine 67, histidine 139, aspartate 210, and histidine 268. Aspartate 66 functions as the Proton acceptor in the catalytic mechanism.

The protein belongs to the RNase Z family. In terms of assembly, homodimer. Zn(2+) is required as a cofactor.

The enzyme catalyses Endonucleolytic cleavage of RNA, removing extra 3' nucleotides from tRNA precursor, generating 3' termini of tRNAs. A 3'-hydroxy group is left at the tRNA terminus and a 5'-phosphoryl group is left at the trailer molecule.. Its function is as follows. Zinc phosphodiesterase, which displays some tRNA 3'-processing endonuclease activity. Probably involved in tRNA maturation, by removing a 3'-trailer from precursor tRNA. The sequence is that of Ribonuclease Z from Nostoc punctiforme (strain ATCC 29133 / PCC 73102).